A 401-amino-acid polypeptide reads, in one-letter code: Pyruvyl transferase 1 (401 aa).

Residues 1–30 (MFANINIRKSVWLFLLAAVSCTLFIYGVTR) form the signal peptide. Residues 38–64 (NPSSLTSPSSSTSVDKKKPLFTKSPRN) form a disordered region. Over residues 39-50 (PSSLTSPSSSTS) the composition is skewed to low complexity.

It belongs to the polysaccharide pyruvyl transferase family.

Its function is as follows. Involved in cell wall biogenesis. Has a role in the addition of Gal-beta1,3 moieties to galactomannans and their subsequent pyruvylation. The sequence is that of Pyruvyl transferase 1 (pvg1) from Schizosaccharomyces pombe (strain 972 / ATCC 24843) (Fission yeast).